A 1193-amino-acid polypeptide reads, in one-letter code: Probable DNA-directed RNA polymerase II subunit RPB2 homolog (1193 aa).

Asp808 is a Mg(2+) binding site. Zn(2+) contacts are provided by Cys1137, Cys1140, Cys1155, and Cys1158. The C4-type zinc-finger motif lies at 1137 to 1158 (CVPCKSYFKVVKTQNGFFCSGC).

The protein belongs to the RNA polymerase beta chain family.

The catalysed reaction is RNA(n) + a ribonucleoside 5'-triphosphate = RNA(n+1) + diphosphate. Functionally, component of the DNA-dependent RNA polymerase that catalyzes the transcription of DNA into RNA using the four ribonucleoside triphosphates as substrates. Second largest component of RNA polymerase II which synthesizes mRNA precursors and many functional non-coding RNAs. Proposed to contribute to the polymerase catalytic activity and forms the polymerase active center together with the largest subunit. This Invertebrate iridescent virus 6 (IIV-6) protein is Probable DNA-directed RNA polymerase II subunit RPB2 homolog.